The primary structure comprises 421 residues: ATP-dependent RNA helicase RhlB (421 aa).

The short motif at 9-37 (QKFSDFSLHPKVVEALEKKGFHNCTPIQA) is the Q motif element. The Helicase ATP-binding domain occupies 40-219 (LPLTLAGRDV…FEQMNNAEYI (180 aa)). Residue 53 to 60 (AQTGTGKT) participates in ATP binding. A DEAD box motif is present at residues 165-168 (DEAD). The 146-residue stretch at 245–390 (RLLQTLIEEE…VSKYNPDALM (146 aa)) folds into the Helicase C-terminal domain. Residues 392–421 (DLPKPLRLTRPRTGNGPRRTGAPRNRRRSG) are disordered. The segment covering 402–414 (PRTGNGPRRTGAP) has biased composition (low complexity).

It belongs to the DEAD box helicase family. RhlB subfamily. In terms of assembly, component of the RNA degradosome, which is a multiprotein complex involved in RNA processing and mRNA degradation.

It is found in the cytoplasm. It carries out the reaction ATP + H2O = ADP + phosphate + H(+). In terms of biological role, DEAD-box RNA helicase involved in RNA degradation. Has RNA-dependent ATPase activity and unwinds double-stranded RNA. The protein is ATP-dependent RNA helicase RhlB of Shigella dysenteriae serotype 1 (strain Sd197).